A 949-amino-acid polypeptide reads, in one-letter code: Pyruvate, phosphate dikinase, chloroplastic (949 aa).

A chloroplast-targeting transit peptide spans M1–S74. T530 bears the Phosphothreonine; by PDRP1 mark. The active-site Tele-phosphohistidine intermediate is H532. R638, R695, E824, G845, T846, N847, and D848 together coordinate substrate. E824 is a Mg(2+) binding site. D848 provides a ligand contact to Mg(2+). Residue C910 is the Proton donor of the active site.

This sequence belongs to the PEP-utilizing enzyme family. In terms of assembly, homodimer. The cofactor is Mg(2+). Post-translationally, phosphorylation of Thr-530 in the dark inactivates the enzyme. Dephosphorylation upon light stimulation reactivates the enzyme.

It is found in the plastid. Its subcellular location is the chloroplast. The catalysed reaction is pyruvate + phosphate + ATP = phosphoenolpyruvate + AMP + diphosphate + H(+). Its activity is regulated as follows. Activated by light-induced dephosphorylation. Inhibited by dark-induced phosphorylation. Both reactions are catalyzed by PDRP1. Functionally, formation of phosphoenolpyruvate, which is the primary acceptor of CO(2) in C4 and some Crassulacean acid metabolism plants. The protein is Pyruvate, phosphate dikinase, chloroplastic (PPD) of Mesembryanthemum crystallinum (Common ice plant).